Here is a 183-residue protein sequence, read N- to C-terminus: MVSTTTFLMLTSIATLTSARSHLTVTIGSNCTLKGPQGGHVFWWRIYDNGWFTKPCDQPGRFFCNGRDLTIINVTANDKGFYYGTDYKSSLDYNIIVLPSTTPAPRKTTFSSSSAANNTISNPTFTALLKRTVNNSTTISTSTISIIAVVTIGISILVFTITYYTCCYKKDEHKGDPLLRFDI.

Asparagine 30, asparagine 73, asparagine 117, asparagine 134, and asparagine 135 each carry an N-linked (GlcNAc...) asparagine; by host glycan.

It belongs to the adenoviridae E3_20 family.

This Homo sapiens (Human) protein is Early E3 20.2 kDa glycoprotein.